The sequence spans 47 residues: MGNPKSNQQPFVPQHIGTKPREAGGNKGKQMQDQSGQHPQVIQTKGE.

2 stretches are compositionally biased toward polar residues: residues 1–11 (MGNPKSNQQPF) and 29–47 (KQMQ…TKGE). The interval 1–47 (MGNPKSNQQPFVPQHIGTKPREAGGNKGKQMQDQSGQHPQVIQTKGE) is disordered.

The protein belongs to the SspN family.

The protein resides in the spore core. The polypeptide is Small, acid-soluble spore protein N (Anoxybacillus flavithermus (strain DSM 21510 / WK1)).